We begin with the raw amino-acid sequence, 476 residues long: Protein transport protein Sec61 subunit alpha (476 aa).

Over 2 to 33 (GIKFLEVIKPFCAVLPEIQKPERKIQFREKVL) the chain is Cytoplasmic. Residues 34 to 53 (WTAITLFIFLVCCQIPLFGI) form a helical membrane-spanning segment. Residues 54–76 (MSSDSADPFYWMRVILASNRGTL) are Lumenal-facing. The helical transmembrane segment at 77–96 (MELGISPIVTSGLIMQLLAG) threads the bilayer. Topologically, residues 97–117 (AKIIEVGDTPKDRALFNGAQK) are cytoplasmic. Residues 118-138 (LFGMIITIGQAIVYVMTGMYG) traverse the membrane as a helical segment. The Lumenal portion of the chain corresponds to 139–144 (DPSEMG). Residues 145 to 165 (AGICLLIIIQLFVAGLIVLLL) form a helical membrane-spanning segment. The Cytoplasmic segment spans residues 166-172 (DELLQKG). Residues 173-193 (YGLGSGISLFIATNICETIVW) form a helical membrane-spanning segment. The Lumenal segment spans residues 194–240 (KAFSPTTVNTGRGTEFEGAIIALFHLLATRTDKVRALREAFYRQNLP). The chain crosses the membrane as a helical span at residues 241–261 (NILNLIATVFVFAVVIYFQGF). At 262–288 (RVDLPIKSARYRGQYNTYPIKLFYTSN) the chain is on the cytoplasmic side. Residues 289–309 (IPIILQSALVSNLYVISQMLS) form a helical membrane-spanning segment. The Lumenal portion of the chain corresponds to 310-354 (TRFSGNFLVNLLGTWSDATSGGPARAYPVAGLCYYLSPPESFGSV). Residues 355–375 (LDDPVHAAIYIVFMLGSCAFF) traverse the membrane as a helical segment. At 376 to 420 (SKTWIEVSGSSAKDVAKQLKEQQMVMRGHRETSMVHELNRYIPTA) the chain is on the cytoplasmic side. The helical transmembrane segment at 421–441 (AAFGGLCIGGLSVMADFLGAI) threads the bilayer. Residues 442-445 (GSGT) are Lumenal-facing. A helical membrane pass occupies residues 446 to 462 (GILLAVTIIYQYFEIFV). The Cytoplasmic segment spans residues 463–476 (KEQSEMGSMGALLF).

It belongs to the SecY/SEC61-alpha family. As to quaternary structure, the SEC61 channel-forming translocon complex consists of channel-forming core components SEC61A1, SEC61B and SEC61G and different auxiliary components such as SEC62 and SEC63. The SEC61 channel associates with the multi-pass translocon (MPT) complex.

The protein resides in the endoplasmic reticulum membrane. Functionally, component of SEC61 channel-forming translocon complex that mediates transport of signal peptide-containing precursor polypeptides across the endoplasmic reticulum (ER). Forms a ribosome receptor and a gated pore in the ER membrane, both functions required for cotranslational translocation of nascent polypeptides. May cooperate with auxiliary protein SEC62, SEC63 and HSPA5/BiP to enable post-translational transport of small presecretory proteins. The SEC61 channel is also involved in ER membrane insertion of transmembrane proteins: it mediates membrane insertion of the first few transmembrane segments of proteins, while insertion of subsequent transmembrane regions of multi-pass membrane proteins is mediated by the multi-pass translocon (MPT) complex. The chain is Protein transport protein Sec61 subunit alpha (sec61a) from Dissostichus mawsoni (Antarctic cod).